A 161-amino-acid chain; its full sequence is UPF0763 protein Cla_1130 (161 aa).

This sequence belongs to the UPF0763 family.

The chain is UPF0763 protein Cla_1130 from Campylobacter lari (strain RM2100 / D67 / ATCC BAA-1060).